The following is a 3241-amino-acid chain: PHD finger protein rhinoceros (3241 aa).

Over residues 1 to 16 (MSQRGKRGNQQHHQSH) the composition is skewed to basic residues. The segment at 1–126 (MSQRGKRGNQ…GASSSSSWQA (126 aa)) is disordered. 2 stretches are compositionally biased toward low complexity: residues 42–55 (PPNG…AEVT) and 90–126 (RAAA…SWQA). The segment at 312–362 (NVICDVCRSPDSEEANEMVFCDNCNICVHQACYGITAIPSGQWLCRTCSMG) adopts a PHD-type 1 zinc-finger fold. The C2HC pre-PHD-type zinc finger occupies 364 to 398 (KPDCVLCPNKGGAMKSNKSGKHWAHVSCALWIPEV). The PHD-type 2 zinc-finger motif lies at 422–481 (LICVLCRKRVGSCIQCSVKPCKTAYHVTCAFQHGLEMRAIIEEGNAEDGVKLRSYCQKHS). Disordered stretches follow at residues 482-501 (MSKG…ASVA), 508-554 (NRYG…ARAQ), 737-1266 (SGKQ…VATP), 1279-1483 (PQRQ…STKV), 1500-1613 (PKTN…SETR), and 1632-1746 (NLGA…QHLL). The span at 540–554 (KTELTSEERNQARAQ) shows a compositional bias: basic and acidic residues. Polar residues predominate over residues 762-777 (KKLNNGILSSRTSSPE). Residues 807–874 (KSSAAAATST…SGSSSAGSGV (68 aa)) show a composition bias toward low complexity. The span at 931–943 (ERCRNRQEPERGA) shows a compositional bias: basic and acidic residues. The span at 949–965 (QSKSVPNRSQASRSKPT) shows a compositional bias: polar residues. A compositionally biased stretch (acidic residues) spans 995 to 1007 (DADESVSSDESEE). Residues 1019–1031 (STTTSGLATTGSA) are compositionally biased toward low complexity. A compositionally biased stretch (polar residues) spans 1060–1075 (TVESNVSDSQNQQTIR). The span at 1087 to 1104 (TAATTSSTSQAASSTSKA) shows a compositional bias: low complexity. Polar residues-rich tracts occupy residues 1117–1126 (IGNSTKTKPN) and 1151–1163 (NMRS…TLQP). Over residues 1184-1211 (KVKDSSSRVSNEADKSSLEKVRPKEHLQ) the composition is skewed to basic and acidic residues. A compositionally biased stretch (polar residues) spans 1313 to 1327 (VTSATISGSGSSVPA). Thr-1346 carries the post-translational modification Phosphothreonine. Ser-1352 carries the phosphoserine modification. Residue Thr-1364 is modified to Phosphothreonine. Low complexity predominate over residues 1382 to 1426 (SSSSSGDSESSSSSSSSGSSSSSGGSDSDSESQASNSENPSSREP). Position 1456 is a phosphothreonine (Thr-1456). Polar residues predominate over residues 1463 to 1483 (NVLNIPSTRSRQNSTTKSTKV). Positions 1541–1558 (SPEKTVSRCKSRAEESPK) are enriched in basic and acidic residues. Over residues 1576-1594 (KGTSSLDKLLNKKQQQMNH) the composition is skewed to polar residues. Pro residues predominate over residues 1599 to 1608 (TPPPISPTPP). The span at 1664-1675 (TAPTRTQLSASA) shows a compositional bias: polar residues. Pro residues predominate over residues 1688–1699 (PAAPLPASPTPT). Residues 1717-1731 (RRMRWRSRRRRRRRS) show a composition bias toward basic residues. Coiled coils occupy residues 1741 to 1770 (HTQH…ASKY) and 1893 to 1925 (SEED…KEAV). Disordered regions lie at residues 2037-2061 (LEKS…GQPA), 2124-2148 (AERR…PVVT), 2203-2227 (NNTN…TPNN), 2346-2454 (TPPV…GGVT), 2598-2629 (ATGT…PAPN), 2667-2691 (SEEV…ARSQ), 2768-2811 (NDDS…NSSS), 2832-2911 (GAGA…SVDE), 2964-3015 (NKRG…TTTM), 3042-3169 (KAET…EAAM), and 3184-3241 (VNVG…CEVR). Residues 2359-2381 (KRTSVSGSNLSKKQTHKSPQLPQ) show a composition bias toward polar residues. Positions 2392-2402 (PLQPPTPPAPV) are enriched in pro residues. Residues 2430 to 2439 (GSGGSGAPGR) show a composition bias toward gly residues. Composition is skewed to polar residues over residues 2598-2611 (ATGT…QHSG) and 2673-2689 (DSDS…SDAR). The span at 2855–2865 (NNDNNGKTGAA) shows a compositional bias: polar residues. The span at 2876-2887 (KTLESSEDDHQA) shows a compositional bias: basic and acidic residues. Phosphoserine is present on residues Ser-2880 and Ser-2881. Polar residues predominate over residues 2899 to 2911 (ANETPSGVSSVDE). Over residues 2964–2974 (NKRGVVVKDGE) the composition is skewed to basic and acidic residues. Residues 2984–3002 (KRPKSSKPKKEKKEKKRQK) show a composition bias toward basic residues. A compositionally biased stretch (low complexity) spans 3003 to 3015 (QQQLILSSSTTTM). Ser-3104 and Ser-3110 each carry phosphoserine. 2 stretches are compositionally biased toward polar residues: residues 3115 to 3130 (LLNS…NTSP) and 3184 to 3197 (VNVG…NSLP). The span at 3198–3218 (SASGTGSASSNSCNSNSINNN) shows a compositional bias: low complexity. The segment covering 3219-3230 (GSGGGRASGEGG) has biased composition (gly residues).

Belongs to the JADE family.

Its subcellular location is the nucleus. May function as a negative regulator of the EGFR/Ras/MAPK signaling pathway during eye development. The polypeptide is PHD finger protein rhinoceros (rno) (Drosophila melanogaster (Fruit fly)).